Reading from the N-terminus, the 328-residue chain is Probable G-protein coupled receptor 82 (328 aa).

Residues 1–11 are Extracellular-facing; the sequence is MTNNSTCIQPS. Residues N3 and N4 are each glycosylated (N-linked (GlcNAc...) asparagine). A helical membrane pass occupies residues 12–32; the sequence is VISTTALPVTYIFLFIIGLFG. The Cytoplasmic segment spans residues 33 to 55; that stretch reads NSLAQWVFLTKIGKKTSTHIYLA. Residues 56-76 form a helical membrane-spanning segment; that stretch reads NLVTANLLVCTAMPFMGIYFL. The Extracellular segment spans residues 77-92; it reads RGFYWKYQSVQCRLVN. Residues 93–115 traverse the membrane as a helical segment; sequence FLGTLSMHVSMFVSLLILSWIAI. Residues 116–156 lie on the Cytoplasmic side of the membrane; sequence SRYATLMKKESKQEATSCYERMFYGHVLKRFRQPNFARTMC. Residues 157–177 form a helical membrane-spanning segment; sequence IYIWGVVLVIIIPVTLYYSVV. Residues 178-197 are Extracellular-facing; it reads EATEEGQSQCYNRQMELGAR. Residues 198 to 218 traverse the membrane as a helical segment; that stretch reads PSQIAGLIGTTFIGFSFLVVV. Over 219–251 the chain is Cytoplasmic; that stretch reads TSYYSLVSHLRRVRTCTSITEKDLTYRSVKRHL. Residues 252–272 form a helical membrane-spanning segment; it reads LIIQVLLVVCFLPYSIFKPIF. At 273-328 the chain is on the extracellular side; it reads YVLHQREGDCQQLNYLIEAKNILTCLASARSSTDPIIFLLLDKTFKKTLYGLLTKS.

The protein belongs to the G-protein coupled receptor 1 family.

Its subcellular location is the cell membrane. Orphan receptor. This is Probable G-protein coupled receptor 82 (Gpr82) from Mus musculus (Mouse).